The chain runs to 136 residues: Large ribosomal subunit protein bL17 (136 aa).

This sequence belongs to the bacterial ribosomal protein bL17 family. In terms of assembly, part of the 50S ribosomal subunit. Contacts protein L32.

This is Large ribosomal subunit protein bL17 from Rhodopseudomonas palustris (strain BisB5).